An 811-amino-acid polypeptide reads, in one-letter code: Ribosome biogenesis protein ERB1 (811 aa).

Polar residues predominate over residues 1 to 11 (MARNSKATDTP). Residues 1 to 138 (MARNSKATDT…VHTKFSDGRP (138 aa)) form a disordered region. Positions 27–96 (EDAEESSSDE…LSDVDSEEFS (70 aa)) are enriched in acidic residues. A compositionally biased stretch (polar residues) spans 104 to 121 (ASITDKLSGTKIRSYSNA). The span at 128-138 (EVHTKFSDGRP) shows a compositional bias: basic and acidic residues. The segment at 270–386 (RFVPSKHEAK…LRKVPGYQEG (117 aa)) is required for interaction with NOP7. The interval 386-422 (GLRERFERCLDLYLAPRTRHNKLNIDPDSLIPELPSP) is required for interaction with YTM1. WD repeat units follow at residues 438–477 (GHTE…QVYK) and 485–525 (NTDD…FDIE). A disordered region spans residues 547-566 (TKNSNIKVNSDDEDEEVEKA). 5 WD repeats span residues 595-637 (QCRK…SQSP), 640-678 (KSKG…LVKK), 681-720 (PGAR…TPYK), 724-764 (YHDK…DLMT), and 780-811 (INSL…LWTT).

The protein belongs to the WD repeat BOP1/ERB1 family. Component of the NOP7 complex, composed of ERB1, NOP7 and YTM1. The complex is held together by ERB1, which interacts with NOP7 via its N-terminal domain and with YTM1 via a high-affinity interaction between the seven-bladed beta-propeller domains of the 2 proteins. The NOP7 complex associates with the 66S pre-ribosome.

It is found in the nucleus. The protein localises to the nucleolus. It localises to the nucleoplasm. In terms of biological role, component of the NOP7 complex, which is required for maturation of the 25S and 5.8S ribosomal RNAs and formation of the 60S ribosome. The polypeptide is Ribosome biogenesis protein ERB1 (Debaryomyces hansenii (strain ATCC 36239 / CBS 767 / BCRC 21394 / JCM 1990 / NBRC 0083 / IGC 2968) (Yeast)).